Reading from the N-terminus, the 198-residue chain is Recombination protein RecR (198 aa).

Residues 57–72 (CAMCNTFTESAVCETC) form a C4-type zinc finger. The 96-residue stretch at 80–175 (ALLCVVETPG…KVSRLARGVP (96 aa)) folds into the Toprim domain.

It belongs to the RecR family.

In terms of biological role, may play a role in DNA repair. It seems to be involved in an RecBC-independent recombinational process of DNA repair. It may act with RecF and RecO. This Herminiimonas arsenicoxydans protein is Recombination protein RecR.